A 338-amino-acid chain; its full sequence is Replication factor C small subunit (338 aa).

Residue 53–60 (GPPGVGKT) participates in ATP binding.

Belongs to the activator 1 small subunits family. RfcS subfamily. In terms of assembly, heteromultimer composed of small subunits (RfcS) and large subunits (RfcL).

Part of the RFC clamp loader complex which loads the PCNA sliding clamp onto DNA. The polypeptide is Replication factor C small subunit (Methanosarcina mazei (strain ATCC BAA-159 / DSM 3647 / Goe1 / Go1 / JCM 11833 / OCM 88) (Methanosarcina frisia)).